Consider the following 696-residue polypeptide: Carotenoid dioxygenase carX (696 aa).

Polar residues predominate over residues 1–16 (MKFLQQNSFTQTSMSQ). A disordered region spans residues 1-27 (MKFLQQNSFTQTSMSQPHEDVSPPLRH). Positions 244, 298, 361, and 642 each coordinate Fe(2+).

This sequence belongs to the carotenoid oxygenase family. Fe(2+) serves as cofactor.

It carries out the reaction all-trans-beta-carotene + O2 = 2 all-trans-retinal. Its pathway is carotenoid biosynthesis. Carotenoid dioxygenase; part of the car gene cluster that mediates the biosynthesis of neurosporaxanthin, a carboxylic apocarotenoid acting as an essential protective pigments and leading to orange pigmentation. CarX mediates the cleavage of beta-carotene produced by carAR into retinal, the rhodopsin's chromophore that is involved in the regulation of the carotenoid biosynthetic pathway via a negative feedback mechanism. It can also convert the synthetic compound beta-apo-8'-carotenal but not C35-apocarotenoids such as the acidic apocarotenoid neurosporaxanthin (C35), as well as its corresponding aldehyde beta-apo-4'-carotenal. The protein is Carotenoid dioxygenase carX of Gibberella fujikuroi (strain CBS 195.34 / IMI 58289 / NRRL A-6831) (Bakanae and foot rot disease fungus).